Reading from the N-terminus, the 160-residue chain is Cytochrome b6-f complex subunit 4 (160 aa).

3 helical membrane passes run 36–56 (LLYV…GLAV), 95–115 (LLGI…PFIE), and 131–151 (TFFM…IFPI).

Belongs to the cytochrome b family. PetD subfamily. In terms of assembly, the 4 large subunits of the cytochrome b6-f complex are cytochrome b6, subunit IV (17 kDa polypeptide, PetD), cytochrome f and the Rieske protein, while the 4 small subunits are PetG, PetL, PetM and PetN. The complex functions as a dimer.

It localises to the cellular thylakoid membrane. Its function is as follows. Component of the cytochrome b6-f complex, which mediates electron transfer between photosystem II (PSII) and photosystem I (PSI), cyclic electron flow around PSI, and state transitions. The polypeptide is Cytochrome b6-f complex subunit 4 (Gloeothece citriformis (strain PCC 7424) (Cyanothece sp. (strain PCC 7424))).